The chain runs to 435 residues: Transcriptional enhancer factor TEF-5 (435 aa).

Polar residues predominate over residues 1-12 (MASNSWNASSSP). The disordered stretch occupies residues 1–34 (MASNSWNASSSPGEAREDGPEGLDKGLDNDAEGV). N-acetylalanine is present on alanine 2. A compositionally biased stretch (basic and acidic residues) spans 14–28 (EAREDGPEGLDKGLD). The segment at residues 28–104 (DNDAEGVWSP…QVLARKKVRE (77 aa)) is a DNA-binding region (TEA). Serine 148 bears the Phosphoserine mark. The segment at 173–435 (GPSQDIKPFA…QHHVYKLVKD (263 aa)) is transcriptional activation.

In terms of assembly, interacts with YAP1 and WWTR1/TAZ. Preferentially expressed in the placenta.

It localises to the nucleus. Functionally, transcription factor which plays a key role in the Hippo signaling pathway, a pathway involved in organ size control and tumor suppression by restricting proliferation and promoting apoptosis. The core of this pathway is composed of a kinase cascade wherein MST1/MST2, in complex with its regulatory protein SAV1, phosphorylates and activates LATS1/2 in complex with its regulatory protein MOB1, which in turn phosphorylates and inactivates YAP1 oncoprotein and WWTR1/TAZ. Acts by mediating gene expression of YAP1 and WWTR1/TAZ, thereby regulating cell proliferation, migration and epithelial mesenchymal transition (EMT) induction. Binds to multiple functional elements of the human chorionic somatomammotropin-B gene enhancer. This is Transcriptional enhancer factor TEF-5 (TEAD3) from Homo sapiens (Human).